Reading from the N-terminus, the 286-residue chain is ATP synthase gamma chain (286 aa).

The protein belongs to the ATPase gamma chain family. As to quaternary structure, F-type ATPases have 2 components, CF(1) - the catalytic core - and CF(0) - the membrane proton channel. CF(1) has five subunits: alpha(3), beta(3), gamma(1), delta(1), epsilon(1). CF(0) has three main subunits: a, b and c.

The protein resides in the cell inner membrane. Its function is as follows. Produces ATP from ADP in the presence of a proton gradient across the membrane. The gamma chain is believed to be important in regulating ATPase activity and the flow of protons through the CF(0) complex. The sequence is that of ATP synthase gamma chain from Shewanella oneidensis (strain ATCC 700550 / JCM 31522 / CIP 106686 / LMG 19005 / NCIMB 14063 / MR-1).